Reading from the N-terminus, the 262-residue chain is Octopine permease ATP-binding protein P (262 aa).

In terms of domain architecture, ABC transporter spans 9–254; the sequence is VQLKDIRKNF…PRTDRFRQFL (246 aa). 41-48 serves as a coordination point for ATP; that stretch reads GSSGSGKS.

This sequence belongs to the ABC transporter superfamily.

It localises to the cell inner membrane. Its function is as follows. Component of the octopine active transport system probably consisting of four subunits: Q, M, P and T. The chain is Octopine permease ATP-binding protein P (occP) from Rhizobium radiobacter (Agrobacterium tumefaciens).